Here is a 514-residue protein sequence, read N- to C-terminus: Threonine synthase (514 aa).

K117 bears the N6-(pyridoxal phosphate)lysine mark. G270, N271, F272, and D274 together coordinate pyridoxal 5'-phosphate. A phosphoserine mark is found at S319 and S321. Residue T449 coordinates pyridoxal 5'-phosphate.

Belongs to the threonine synthase family. The cofactor is pyridoxal 5'-phosphate.

The catalysed reaction is O-phospho-L-homoserine + H2O = L-threonine + phosphate. It functions in the pathway amino-acid biosynthesis; L-threonine biosynthesis; L-threonine from L-aspartate: step 5/5. Functionally, catalyzes the gamma-elimination of phosphate from L-phosphohomoserine and the beta-addition of water to produce L-threonine. The chain is Threonine synthase (thrc) from Schizosaccharomyces pombe (strain 972 / ATCC 24843) (Fission yeast).